A 273-amino-acid polypeptide reads, in one-letter code: 5-deoxy-glucuronate isomerase (273 aa).

It belongs to the isomerase IolB family.

The enzyme catalyses 5-deoxy-D-glucuronate = 5-dehydro-2-deoxy-D-gluconate. The protein operates within polyol metabolism; myo-inositol degradation into acetyl-CoA; acetyl-CoA from myo-inositol: step 4/7. In terms of biological role, involved in the isomerization of 5-deoxy-glucuronate (5DG) to 5-dehydro-2-deoxy-D-gluconate (DKG or 2-deoxy-5-keto-D-gluconate). This chain is 5-deoxy-glucuronate isomerase, found in Listeria monocytogenes serotype 4a (strain HCC23).